We begin with the raw amino-acid sequence, 186 residues long: Interferon beta-3 (186 aa).

The N-terminal stretch at 1 to 21 (MTYRCLLPMVLLLCFSTTALS) is a signal peptide. A disulfide bridge connects residues cysteine 52 and cysteine 161. 2 N-linked (GlcNAc...) asparagine glycosylation sites follow: asparagine 131 and asparagine 173.

It belongs to the alpha/beta interferon family. Monomer.

The protein resides in the secreted. Has antiviral, antibacterial and anticancer activities. This is Interferon beta-3 (IFNB3) from Bos taurus (Bovine).